A 406-amino-acid chain; its full sequence is CMP-sialic acid transporter 2 (406 aa).

Residues 1–41 (MKNGMAECSVCRSRLVSPSSKAISRAYDNYNYKIRVSSKQR) lie on the Cytoplasmic side of the membrane. The chain crosses the membrane as a helical span at residues 42 to 62 (ALNVFLVVGDCMLVGLQPVLV). Residues 63 to 75 (YMSKVDGKFNFSP) lie on the Lumenal side of the membrane. The chain crosses the membrane as a helical span at residues 76-96 (ISVNFLTEIAKVIFAMVMLLF). Residues 97 to 148 (QARHQKVGEKPLLSLSTFVQAARNNMLLAVPAGLYAINNYLKFTMQLYFNPA) are Cytoplasmic-facing. Residues 149-169 (TVKMLSNLKVLVIAVLLKMIM) form a helical membrane-spanning segment. Over 170–172 (KRR) the chain is Lumenal. A helical transmembrane segment spans residues 173-193 (FSIIQWEALALLLIGISINQL). Over 194-201 (RSLPEGAT) the chain is Cytoplasmic. A helical membrane pass occupies residues 202 to 222 (TVAVPIATGAYICTFIFVTVP). At 223–245 (SLASVYNEYALKSQYDTSIYLQN) the chain is on the lumenal side. Residues 246-266 (LFLYGYGAIFNFLGILGTVIY) traverse the membrane as a helical segment. Residues 267 to 282 (KGPGSFDILQGHSRAT) lie on the Cytoplasmic side of the membrane. The helical transmembrane segment at 283–303 (MFLILNNAAQGILSSFFFKYA) threads the bilayer. At 304–323 (DTILKKYSSTVATIFTGIAS) the chain is on the lumenal side. A helical membrane pass occupies residues 324–344 (AALFGHILTMNFLLGISIVFI). Over 345-406 (SMHQFFSPLS…SDDRVPLLPR (62 aa)) the chain is Cytoplasmic.

This sequence belongs to the nucleotide-sugar transporter family. CMP-Sialate:CMP antiporter (TC 2.A.7.12) subfamily.

Its subcellular location is the golgi apparatus membrane. Functionally, sugar transporter involved in the transport of CMP-sialic acid from the cytoplasm into the Golgi. The protein is CMP-sialic acid transporter 2 of Arabidopsis thaliana (Mouse-ear cress).